The chain runs to 639 residues: Poly(A)-specific ribonuclease PARN (639 aa).

Residues D28 and E30 each contribute to the a divalent metal cation site. S163 and S167 each carry phosphoserine. In terms of domain architecture, R3H spans 178-245 (KKFIDQVVEK…ERYIVISKVD (68 aa)). The residue at position 220 (K220) is an N6-acetyllysine. 2 residues coordinate a divalent metal cation: D292 and D382. K499 carries the N6-acetyllysine modification. A Phosphoserine modification is found at S530. S557 carries the post-translational modification Phosphoserine; by MAPKAPK2. Positions 560–639 (APSTVGKRNL…ATLFEVPDTW (80 aa)) are disordered. Residues S583 and S587 each carry the phosphoserine modification. Positions 606–615 (KKAKKLKRMK) are enriched in basic residues. S619, S623, and S628 each carry phosphoserine. Position 631 is a phosphothreonine (T631).

This sequence belongs to the CAF1 family. In terms of assembly, homodimer. Found in a mRNA decay complex with RENT1, RENT2 and RENT3B. Interacts with KHSRP. Interacts with CELF1/CUGBP1. Interacts with ZC3HAV1 in an RNA-independent manner. Interacts with DHX36. Requires Mg(2+) as cofactor. In terms of processing, phosphorylation by MAPKAPK2, preventing GADD45A mRNA degradation after genotoxic stress. Ubiquitous.

The protein localises to the nucleus. It is found in the cytoplasm. Its subcellular location is the nucleolus. It carries out the reaction Exonucleolytic cleavage of poly(A) to 5'-AMP.. 3'-exoribonuclease that has a preference for poly(A) tails of mRNAs, thereby efficiently degrading poly(A) tails. Exonucleolytic degradation of the poly(A) tail is often the first step in the decay of eukaryotic mRNAs and is also used to silence certain maternal mRNAs translationally during oocyte maturation and early embryonic development. Interacts with both the 3'-end poly(A) tail and the 5'-end cap structure during degradation, the interaction with the cap structure being required for an efficient degradation of poly(A) tails. Involved in nonsense-mediated mRNA decay, a critical process of selective degradation of mRNAs that contain premature stop codons. Also involved in degradation of inherently unstable mRNAs that contain AU-rich elements (AREs) in their 3'-UTR, possibly via its interaction with KHSRP. Probably mediates the removal of poly(A) tails of AREs mRNAs, which constitutes the first step of destabilization. Also able to recognize and trim poly(A) tails of microRNAs such as MIR21 and H/ACA box snoRNAs (small nucleolar RNAs) leading to microRNAs degradation or snoRNA increased stability. This is Poly(A)-specific ribonuclease PARN (PARN) from Homo sapiens (Human).